We begin with the raw amino-acid sequence, 547 residues long: Chaperonin GroEL 1 (547 aa).

ATP-binding positions include 30-33, lysine 51, 87-91, glycine 415, 479-481, and aspartate 495; these read TLGP, DGTTT, and NAA.

The protein belongs to the chaperonin (HSP60) family. Forms a cylinder of 14 subunits composed of two heptameric rings stacked back-to-back. Interacts with the co-chaperonin GroES.

Its subcellular location is the cytoplasm. It carries out the reaction ATP + H2O + a folded polypeptide = ADP + phosphate + an unfolded polypeptide.. Functionally, together with its co-chaperonin GroES, plays an essential role in assisting protein folding. The GroEL-GroES system forms a nano-cage that allows encapsulation of the non-native substrate proteins and provides a physical environment optimized to promote and accelerate protein folding. In Vibrio parahaemolyticus serotype O3:K6 (strain RIMD 2210633), this protein is Chaperonin GroEL 1.